We begin with the raw amino-acid sequence, 239 residues long: Octanoyltransferase (239 aa).

One can recognise a BPL/LPL catalytic domain in the interval 48–236 (DGGDELVWLV…AFEAVFGETT (189 aa)). Substrate is bound by residues 87–94 (RGGEYTYH), 167–169 (ALG), and 180–182 (GLS). Catalysis depends on cysteine 198, which acts as the Acyl-thioester intermediate.

It belongs to the LipB family.

The protein localises to the cytoplasm. It carries out the reaction octanoyl-[ACP] + L-lysyl-[protein] = N(6)-octanoyl-L-lysyl-[protein] + holo-[ACP] + H(+). The protein operates within protein modification; protein lipoylation via endogenous pathway; protein N(6)-(lipoyl)lysine from octanoyl-[acyl-carrier-protein]: step 1/2. In terms of biological role, catalyzes the transfer of endogenously produced octanoic acid from octanoyl-acyl-carrier-protein onto the lipoyl domains of lipoate-dependent enzymes. Lipoyl-ACP can also act as a substrate although octanoyl-ACP is likely to be the physiological substrate. The protein is Octanoyltransferase of Rhizobium johnstonii (strain DSM 114642 / LMG 32736 / 3841) (Rhizobium leguminosarum bv. viciae).